A 79-amino-acid chain; its full sequence is Cytochrome b (79 aa).

3 helical membrane-spanning segments follow: residues 1 to 7, 31 to 52, and 67 to 79; these read TALLLAM, WLIR…YLHI, and WNIG…TLMA. Residues H37 and H51 each contribute to the heme b site.

Belongs to the cytochrome b family. The cytochrome bc1 complex contains 11 subunits: 3 respiratory subunits (MT-CYB, CYC1 and UQCRFS1), 2 core proteins (UQCRC1 and UQCRC2) and 6 low-molecular weight proteins (UQCRH/QCR6, UQCRB/QCR7, UQCRQ/QCR8, UQCR10/QCR9, UQCR11/QCR10 and a cleavage product of UQCRFS1). This cytochrome bc1 complex then forms a dimer. Heme b is required as a cofactor.

It localises to the mitochondrion inner membrane. Functionally, component of the ubiquinol-cytochrome c reductase complex (complex III or cytochrome b-c1 complex) that is part of the mitochondrial respiratory chain. The b-c1 complex mediates electron transfer from ubiquinol to cytochrome c. Contributes to the generation of a proton gradient across the mitochondrial membrane that is then used for ATP synthesis. The polypeptide is Cytochrome b (MT-CYB) (Corcorax melanoramphos (White-winged chough)).